The sequence spans 142 residues: Coactosin-like protein (142 aa).

A2 carries the post-translational modification N-acetylalanine. The 129-residue stretch at 2–130 (ATKIDKEACR…EEDFIKSELK (129 aa)) folds into the ADF-H domain. Positions 66–75 (TGDAMSKRSK) are flexible and important for F-actin binding. K102 and K126 each carry N6-acetyllysine.

The protein belongs to the actin-binding proteins ADF family. Coactosin subfamily. As to quaternary structure, interacts with 5-lipoxygenase (ALOX5/5LO) in a calcium-independent manner. Binds to F-actin with a stoichiometry of 1:2. As to expression, widely expressed with highest levels in placenta, lung, kidney and peripheral blood leukocytes and lower levels in brain, liver and pancreas.

It is found in the cytoplasm. The protein localises to the cytoskeleton. The protein resides in the nucleus. Functionally, binds to F-actin in a calcium-independent manner. Has no direct effect on actin depolymerization. Acts as a chaperone for ALOX5 (5LO), influencing both its stability and activity in leukotrienes synthesis. This is Coactosin-like protein (COTL1) from Homo sapiens (Human).